Here is a 132-residue protein sequence, read N- to C-terminus: Small ribosomal subunit protein uS8 (132 aa).

Belongs to the universal ribosomal protein uS8 family. In terms of assembly, part of the 30S ribosomal subunit. Contacts proteins S5 and S12.

Functionally, one of the primary rRNA binding proteins, it binds directly to 16S rRNA central domain where it helps coordinate assembly of the platform of the 30S subunit. This chain is Small ribosomal subunit protein uS8, found in Halothermothrix orenii (strain H 168 / OCM 544 / DSM 9562).